Here is a 197-residue protein sequence, read N- to C-terminus: UPF0314 protein NGR_c32320 (197 aa).

3 helical membrane-spanning segments follow: residues 16–36, 66–86, and 152–172; these read WIWL…QHLM, WYTP…YLLL, and LPVA…GWII.

The protein belongs to the UPF0314 family.

The protein resides in the cell membrane. The polypeptide is UPF0314 protein NGR_c32320 (Sinorhizobium fredii (strain NBRC 101917 / NGR234)).